The sequence spans 350 residues: 4-hydroxythreonine-4-phosphate dehydrogenase (350 aa).

The substrate site is built by H138 and T139. Positions 173, 218, and 273 each coordinate a divalent metal cation. Substrate-binding residues include K281, N290, and R299.

It belongs to the PdxA family. As to quaternary structure, homodimer. Zn(2+) is required as a cofactor. Requires Mg(2+) as cofactor. Co(2+) serves as cofactor.

The protein localises to the cytoplasm. It carries out the reaction 4-(phosphooxy)-L-threonine + NAD(+) = 3-amino-2-oxopropyl phosphate + CO2 + NADH. The protein operates within cofactor biosynthesis; pyridoxine 5'-phosphate biosynthesis; pyridoxine 5'-phosphate from D-erythrose 4-phosphate: step 4/5. Catalyzes the NAD(P)-dependent oxidation of 4-(phosphooxy)-L-threonine (HTP) into 2-amino-3-oxo-4-(phosphooxy)butyric acid which spontaneously decarboxylates to form 3-amino-2-oxopropyl phosphate (AHAP). This Xanthobacter autotrophicus (strain ATCC BAA-1158 / Py2) protein is 4-hydroxythreonine-4-phosphate dehydrogenase.